Here is a 209-residue protein sequence, read N- to C-terminus: Scoloptoxin SSD346 (209 aa).

Positions 1–22 (NILLSSTLFVLLMFQIIGSGLG) are cleaved as a signal peptide.

Contains 2 disulfide bonds. Expressed by the venom gland.

The protein resides in the secreted. Functionally, may act as a voltage-gated calcium channel inhibitor. The sequence is that of Scoloptoxin SSD346 from Scolopendra dehaani (Thai centipede).